The following is an 82-amino-acid chain: Metallothionein (82 aa).

Cd(2+) is bound by residues cysteine 6, cysteine 8, cysteine 11, cysteine 13, cysteine 29, cysteine 33, histidine 37, cysteine 43, cysteine 48, and cysteine 50. Cysteine 6, cysteine 8, and cysteine 11 together coordinate Zn(2+). 6 residues coordinate Zn(2+): cysteine 29, cysteine 33, histidine 37, cysteine 43, cysteine 48, and cysteine 50. The segment at isoleucine 61–proline 82 is disordered.

The protein belongs to the metallothionein superfamily.

In terms of biological role, metallothioneins are small proteins that have a high content of cysteine residues which allow them to bind heavy metal ions through clusters of thiolate bonds. Preferentially, binds four Cd(2+) ions. Also binds three Zn(2+) ions but with less affinity. Required for long-term viability. May play a role in the storage or sequestration of metals when present in excess. The polypeptide is Metallothionein (Pseudomonas fluorescens (strain Q2-87)).